We begin with the raw amino-acid sequence, 183 residues long: uncharacterized protein (183 aa).

3 disordered regions span residues 1–44 (MPFY…VMTA), 68–137 (GRAG…LGLR), and 163–183 (RDDP…VWPE).

This is an uncharacterized protein from Dryophytes versicolor (chameleon treefrog).